A 202-amino-acid chain; its full sequence is 3-isopropylmalate dehydratase small subunit (202 aa).

The protein belongs to the LeuD family. LeuD type 1 subfamily. Heterodimer of LeuC and LeuD.

The enzyme catalyses (2R,3S)-3-isopropylmalate = (2S)-2-isopropylmalate. It functions in the pathway amino-acid biosynthesis; L-leucine biosynthesis; L-leucine from 3-methyl-2-oxobutanoate: step 2/4. In terms of biological role, catalyzes the isomerization between 2-isopropylmalate and 3-isopropylmalate, via the formation of 2-isopropylmaleate. The chain is 3-isopropylmalate dehydratase small subunit from Rhizobium rhizogenes (strain K84 / ATCC BAA-868) (Agrobacterium radiobacter).